The following is a 323-amino-acid chain: Leucine-rich repeat-containing protein 46 (323 aa).

LRR repeat units lie at residues 49-70 (ELETVRLDGEGITCIGNLEKLR), 71-92 (NIHSLYLQSNKIQRIENLACIT), 93-114 (SLRFLSLARNQIRHVENLLDLQ), and 115-135 (YLQFLDLSENLIETLKLDELP). The LRRCT domain maps to 146 to 188 (NPCTNQEGYRKMVIGALPLLLDLDKQPILERWTSDEEDKSSDD). A Phosphothreonine modification is found at Thr178. Ser179, Ser185, and Ser186 each carry phosphoserine. Residues 203-228 (RGFFKDLEQELHQHQERRQQAALTEH) adopt a coiled-coil conformation. The interval 249–323 (MAGDCSSTAT…TKMTNKKSTK (75 aa)) is disordered. Positions 267–316 (PKATSSTQTASTTKKQVSKNQKSSVQARKGALAATTSKTSQAATPSMTKM) are enriched in low complexity. Ser303 bears the Phosphoserine mark.

Testis-specific (at protein level).

The protein localises to the cell projection. The protein resides in the cilium. Its subcellular location is the flagellum. Its function is as follows. Required for normal spermatogenesis and male fertility. Plays an important role in sperm flagellum biogenesis. The protein is Leucine-rich repeat-containing protein 46 (Lrrc46) of Mus musculus (Mouse).